The sequence spans 190 residues: Threonylcarbamoyl-AMP synthase (190 aa).

The 184-residue stretch at Thr-7 to Gly-190 folds into the YrdC-like domain.

It belongs to the SUA5 family. TsaC subfamily.

The protein localises to the cytoplasm. It catalyses the reaction L-threonine + hydrogencarbonate + ATP = L-threonylcarbamoyladenylate + diphosphate + H2O. Its function is as follows. Required for the formation of a threonylcarbamoyl group on adenosine at position 37 (t(6)A37) in tRNAs that read codons beginning with adenine. Catalyzes the conversion of L-threonine, HCO(3)(-)/CO(2) and ATP to give threonylcarbamoyl-AMP (TC-AMP) as the acyladenylate intermediate, with the release of diphosphate. This chain is Threonylcarbamoyl-AMP synthase, found in Salmonella choleraesuis (strain SC-B67).